Reading from the N-terminus, the 334-residue chain is Beta-hexosaminidase (334 aa).

Residues aspartate 60, arginine 68, arginine 133, and 163–164 contribute to the substrate site; that span reads KH. Histidine 176 acts as the Proton donor/acceptor in catalysis. The active-site Nucleophile is the aspartate 247.

It belongs to the glycosyl hydrolase 3 family. NagZ subfamily.

Its subcellular location is the cytoplasm. It carries out the reaction Hydrolysis of terminal non-reducing N-acetyl-D-hexosamine residues in N-acetyl-beta-D-hexosaminides.. Its pathway is cell wall biogenesis; peptidoglycan recycling. In terms of biological role, plays a role in peptidoglycan recycling by cleaving the terminal beta-1,4-linked N-acetylglucosamine (GlcNAc) from peptide-linked peptidoglycan fragments, giving rise to free GlcNAc, anhydro-N-acetylmuramic acid and anhydro-N-acetylmuramic acid-linked peptides. The polypeptide is Beta-hexosaminidase (Xanthomonas axonopodis pv. citri (strain 306)).